A 34-amino-acid chain; its full sequence is Photosystem II reaction center protein M (34 aa).

The chain crosses the membrane as a helical span at residues Ile5–Ile25.

This sequence belongs to the PsbM family. As to quaternary structure, PSII is composed of 1 copy each of membrane proteins PsbA, PsbB, PsbC, PsbD, PsbE, PsbF, PsbH, PsbI, PsbJ, PsbK, PsbL, PsbM, PsbT, PsbX, PsbY, PsbZ, Psb30/Ycf12, at least 3 peripheral proteins of the oxygen-evolving complex and a large number of cofactors. It forms dimeric complexes.

It localises to the plastid. It is found in the chloroplast thylakoid membrane. One of the components of the core complex of photosystem II (PSII). PSII is a light-driven water:plastoquinone oxidoreductase that uses light energy to abstract electrons from H(2)O, generating O(2) and a proton gradient subsequently used for ATP formation. It consists of a core antenna complex that captures photons, and an electron transfer chain that converts photonic excitation into a charge separation. This subunit is found at the monomer-monomer interface. The polypeptide is Photosystem II reaction center protein M (Lolium perenne (Perennial ryegrass)).